Reading from the N-terminus, the 173-residue chain is Co-chaperone protein HscB homolog (173 aa).

Residues 5-77 enclose the J domain; that stretch reads CHFALFELKP…PKRARYLLAM (73 aa).

The protein belongs to the HscB family. In terms of assembly, interacts with HscA and stimulates its ATPase activity.

Its function is as follows. Co-chaperone involved in the maturation of iron-sulfur cluster-containing proteins. Seems to help targeting proteins to be folded toward HscA. This is Co-chaperone protein HscB homolog from Pseudomonas syringae pv. tomato (strain ATCC BAA-871 / DC3000).